Consider the following 236-residue polypeptide: Phosphoserine phosphatase (236 aa).

Aspartate 30 (nucleophile) is an active-site residue. Mg(2+) contacts are provided by aspartate 30 and aspartate 32. Aspartate 32 serves as the catalytic Proton donor. Substrate contacts are provided by residues glutamate 39, arginine 76, serine 120 to glycine 121, and lysine 169. Aspartate 192 contributes to the Mg(2+) binding site. Asparagine 195 contacts substrate.

It belongs to the HAD-like hydrolase superfamily. SerB family. The cofactor is Mg(2+).

The catalysed reaction is O-phospho-L-serine + H2O = L-serine + phosphate. It carries out the reaction O-phospho-D-serine + H2O = D-serine + phosphate. It participates in amino-acid biosynthesis; L-serine biosynthesis; L-serine from 3-phospho-D-glycerate: step 3/3. The chain is Phosphoserine phosphatase from Polaromonas sp. (strain JS666 / ATCC BAA-500).